We begin with the raw amino-acid sequence, 531 residues long: MSGRGAGGFPLPPLSPGGGAVAAALGAPPPPAGPGMLPNPALRGPGPSGGMGVPGAAAFRPMGPAGPAAQYQRPGMSPGSRMPMAGLQVGPPAGSPFGTAAPLRPGMPPTMMDPFRKRLLVPQAQPPMPAQRRGLKRRKMADKVLPQRIRELVPESQAYMDLLAFERKLDQTIARKRMEIQEAIKKPLTQKRKLRIYISNTFSPSKADGDNSGTAGTPGGTPAADKVASWELRVEGKLLDDPSKQKRKFSSFFKSLVIELDKELYGPDNHLVEWHRMPTTQETDGFQVKRPGDLNVKCTLLLMLDHQPPQYKLDPRLARLLGVHTQTRAAIMQALWLYIKHNQLQDGHEREYINCNRYFRQIFSCGRLRFSEIPMKLAGLLQHPDPIVINHVISVDPNDQKKTACYDIDVEVDDPLKAQMSNFLASTTNQQEIASLDVKIHETIESINQLKTQRDFMLSFSTEPQDFIQEWLRSQRRDLKIITDVIGNPEEERRAAFYHQPWAQEAVGRHIFAKVQQRRQELEQVLGIRLT.

Positions 20–85 are disordered; the sequence is AVAAALGAPP…MSPGSRMPMA (66 aa). Residues 34-45 are compositionally biased toward low complexity; sequence PGMLPNPALRGP. Arg81 and Arg104 each carry asymmetric dimethylarginine. The interval 202-226 is disordered; the sequence is FSPSKADGDNSGTAGTPGGTPAADK. Phosphoserine is present on Ser203. Position 217 is a phosphothreonine (Thr217). Lys226 participates in a covalent cross-link: Glycyl lysine isopeptide (Lys-Gly) (interchain with G-Cter in SUMO2). Positions 306-383 constitute an SWIB/MDM2 domain; sequence HQPPQYKLDP…PMKLAGLLQH (78 aa).

Belongs to the SMARCD family. In terms of assembly, component of the multiprotein chromatin-remodeling complexes SWI/SNF: SWI/SNF-A (BAF), SWI/SNF-B (PBAF) and related complexes. The canonical complex contains a catalytic subunit (either SMARCA4/BRG1/BAF190A or SMARCA2/BRM/BAF190B), and at least SMARCE1, ACTL6A/BAF53, SMARCC1/BAF155, SMARCC2/BAF170, and SMARCB1/SNF5/BAF47. Other subunits specific to each of the complexes may also be present permitting several possible combinations developmentally and tissue specific. Component of the BAF complex, which includes at least actin (ACTB), ARID1A/BAF250A, ARID1B/BAF250B, SMARCA2/BRM, SMARCA4/BRG1, ACTL6A/BAF53, ACTL6B/BAF53B, SMARCE1/BAF57, SMARCC1/BAF155, SMARCC2/BAF170, SMARCB1/SNF5/INI1, and one or more SMARCD1/BAF60A, SMARCD2/BAF60B, or SMARCD3/BAF60C. In muscle cells, the BAF complex also contains DPF3. Component of the SWI/SNF-B (PBAF) chromatin remodeling complex, at least composed of SMARCA4/BRG1, SMARCB1/BAF47/SNF5, ACTL6A/BAF53A or ACTL6B/BAF53B, SMARCE1/BAF57, SMARCD1/BAF60A, SMARCD2/BAF60B, perhaps SMARCD3/BAF60C, SMARCC1/BAF155, SMARCC2/BAF170, PBRM1/BAF180, ARID2/BAF200 and actin (ACTB). Interacts with UNKL. Interacts with CEBPE. Ubiquitinated through a signaling process involving RAC1 and the RING finger protein UNKL.

The protein localises to the nucleus. Involved in transcriptional activation and repression of select genes by chromatin remodeling (alteration of DNA-nucleosome topology). Component of SWI/SNF chromatin remodeling complexes that carry out key enzymatic activities, changing chromatin structure by altering DNA-histone contacts within a nucleosome in an ATP-dependent manner. Critical regulator of myeloid differentiation, controlling granulocytopoiesis and the expression of genes involved in neutrophil granule formation. In Rattus norvegicus (Rat), this protein is SWI/SNF-related matrix-associated actin-dependent regulator of chromatin subfamily D member 2 (Smarcd2).